A 578-amino-acid chain; its full sequence is Hyaluronan synthase 1 (578 aa).

Topologically, residues 1–25 are cytoplasmic; sequence MRQQDAPKPTPAACRCSGLARRVLT. A helical membrane pass occupies residues 26–46; sequence IAFALLILGLMTWAYAAGVPL. Topologically, residues 47–52 are extracellular; the sequence is ASDRYG. A helical membrane pass occupies residues 53-73; the sequence is LLAFGLYGAFLSAHLVAQSLF. Over 74-399 the chain is Cytoplasmic; sequence AYLEHRRVAA…NALWWHRHHA (326 aa). Residues 400–420 traverse the membrane as a helical segment; it reads WMTYEAVVSGLFPFFVAATVL. Residues 421 to 430 are Extracellular-facing; it reads RLFYAGRPWA. The chain crosses the membrane as a helical span at residues 431–451; it reads LLWVLLCVQGVALAKAAFAAW. Residues 452–457 are Cytoplasmic-facing; the sequence is LRGCLR. The chain crosses the membrane as a helical span at residues 458–478; the sequence is MVLLSLYAPLYMCGLLPAKFL. The Extracellular segment spans residues 479-497; the sequence is ALVTMNQSGWGTSGRRKLA. Residues 498–518 form a helical membrane-spanning segment; sequence ANYVPLLPLALWALLLLGGLV. At 519 to 540 the chain is on the cytoplasmic side; that stretch reads RSVAHEARADWSGPSRAAEAYH. A helical transmembrane segment spans residues 541–561; it reads LAAGAGAYVGYWVAMLTLYWV. The Extracellular portion of the chain corresponds to 562–578; it reads GVRRLCRRRTGGYRVQV.

It belongs to the NodC/HAS family. Mg(2+) is required as a cofactor. In terms of tissue distribution, widely expressed. Highly expressed in ovary followed by spleen, thymus, prostate, testes and large intestine. Weakly expressed in small intestine.

Its subcellular location is the membrane. The catalysed reaction is [hyaluronan](n) + UDP-N-acetyl-alpha-D-glucosamine = N-acetyl-beta-D-glucosaminyl-(1-&gt;4)-[hyaluronan](n) + UDP + H(+). It carries out the reaction N-acetyl-beta-D-glucosaminyl-(1-&gt;4)-[hyaluronan](n) + UDP-alpha-D-glucuronate = [hyaluronan](n+1) + UDP + H(+). It functions in the pathway glycan biosynthesis; hyaluronan biosynthesis. Functionally, catalyzes the addition of GlcNAc or GlcUA monosaccharides to the nascent hyaluronan polymer. Therefore, it is essential to hyaluronan synthesis a major component of most extracellular matrices that has a structural role in tissues architectures and regulates cell adhesion, migration and differentiation. This is one of the isozymes catalyzing that reaction. Also able to catalyze the synthesis of chito-oligosaccharide depending on the substrate. The chain is Hyaluronan synthase 1 (HAS1) from Homo sapiens (Human).